The sequence spans 123 residues: Small ribosomal subunit protein uS12 (123 aa).

The residue at position 89 (D89) is a 3-methylthioaspartic acid.

This sequence belongs to the universal ribosomal protein uS12 family. In terms of assembly, part of the 30S ribosomal subunit. Contacts proteins S8 and S17. May interact with IF1 in the 30S initiation complex.

Its function is as follows. With S4 and S5 plays an important role in translational accuracy. In terms of biological role, interacts with and stabilizes bases of the 16S rRNA that are involved in tRNA selection in the A site and with the mRNA backbone. Located at the interface of the 30S and 50S subunits, it traverses the body of the 30S subunit contacting proteins on the other side and probably holding the rRNA structure together. The combined cluster of proteins S8, S12 and S17 appears to hold together the shoulder and platform of the 30S subunit. This chain is Small ribosomal subunit protein uS12, found in Methylorubrum extorquens (strain PA1) (Methylobacterium extorquens).